A 397-amino-acid chain; its full sequence is Arginine biosynthesis bifunctional protein ArgJ (397 aa).

Residues Thr-147, Lys-173, Thr-184, Glu-270, Asn-392, and Thr-397 each contribute to the substrate site. Catalysis depends on Thr-184, which acts as the Nucleophile.

It belongs to the ArgJ family. Heterotetramer of two alpha and two beta chains.

Its subcellular location is the cytoplasm. The catalysed reaction is N(2)-acetyl-L-ornithine + L-glutamate = N-acetyl-L-glutamate + L-ornithine. It catalyses the reaction L-glutamate + acetyl-CoA = N-acetyl-L-glutamate + CoA + H(+). It functions in the pathway amino-acid biosynthesis; L-arginine biosynthesis; L-ornithine and N-acetyl-L-glutamate from L-glutamate and N(2)-acetyl-L-ornithine (cyclic): step 1/1. It participates in amino-acid biosynthesis; L-arginine biosynthesis; N(2)-acetyl-L-ornithine from L-glutamate: step 1/4. In terms of biological role, catalyzes two activities which are involved in the cyclic version of arginine biosynthesis: the synthesis of N-acetylglutamate from glutamate and acetyl-CoA as the acetyl donor, and of ornithine by transacetylation between N(2)-acetylornithine and glutamate. This Streptococcus thermophilus (strain CNRZ 1066) protein is Arginine biosynthesis bifunctional protein ArgJ.